Here is a 154-residue protein sequence, read N- to C-terminus: MSNIEIKILDSRMKNNFSLPSYATLGSSGLDLRACLDETVKLKAHKTILIPTGIAIYIANPNITALILPRSGLGHKKGIVLGNLVGLIDSDYQGQLMISLWNRSDQDFYVNPHDRVAQIIFVPIIRPCFLLVKNFNETSRSKKGFGHSGVSGVI.

Residues 70 to 72, N83, 87 to 89, and M97 contribute to the substrate site; these read RSG and LID.

It belongs to the dUTPase family. Requires Mg(2+) as cofactor.

It carries out the reaction dUTP + H2O = dUMP + diphosphate + H(+). It functions in the pathway pyrimidine metabolism; dUMP biosynthesis; dUMP from dCTP (dUTP route): step 2/2. Functionally, this enzyme is involved in nucleotide metabolism: it produces dUMP, the immediate precursor of thymidine nucleotides and it decreases the intracellular concentration of dUTP so that uracil cannot be incorporated into DNA. The sequence is that of Deoxyuridine 5'-triphosphate nucleotidohydrolase from Buchnera aphidicola subsp. Acyrthosiphon pisum (strain 5A).